A 572-amino-acid chain; its full sequence is MSVDQAVLNRIWSETILTELNRFGVNHVCIAPGSRSTPLTVEAADNPNFTIHTHFDERGLGFMALGLAKASKEPVALIVTSGTAVANLLPAIAEAKLTGEKLVVLTADRPVELVGCGANQAINQLGIFAEHVSDSLNLPSPTLSTPLNWLLTSVDEVMFTQRLRGSAVHINCAFPEPLYSNTDKSTYQGYLDTVAGWRDSKVTYCQRFNPKTSSAIPSCGDNKGLVVIGSLPLIQAQAARTFAEQMGWPVLADPQSGVSSDWAHFDLWLQNPRMASQLDDCDLIVQFGSRIISKRFNHWLEKHVSRNQQGGDTQYWFVSPRLDRDNQSHLPQWHWAEQPSAWVERTSGFSSEHAGWADKLAADIKQVTQHAKGLFISDPKSELSEIALAIDVAERAQGVDLFVGNSLFVRLIDMFGKLDNTEVFTNRGASGIDGLFATASGVQRARNNPMLMFIGDTSALYGLNSLALFTHSELPSVLVIANNDGGAIFDLLPVPQEHRESFYQMPHGYEFEHAAKQFGLQYRKPSSLAEYQSLVSEHFASGQGALVVEVQTPSNQAVEHLKSFDKNLHALF.

The protein belongs to the TPP enzyme family. MenD subfamily. Homodimer. Mg(2+) is required as a cofactor. It depends on Mn(2+) as a cofactor. The cofactor is thiamine diphosphate.

The catalysed reaction is isochorismate + 2-oxoglutarate + H(+) = 5-enolpyruvoyl-6-hydroxy-2-succinyl-cyclohex-3-ene-1-carboxylate + CO2. Its pathway is quinol/quinone metabolism; 1,4-dihydroxy-2-naphthoate biosynthesis; 1,4-dihydroxy-2-naphthoate from chorismate: step 2/7. It participates in quinol/quinone metabolism; menaquinone biosynthesis. In terms of biological role, catalyzes the thiamine diphosphate-dependent decarboxylation of 2-oxoglutarate and the subsequent addition of the resulting succinic semialdehyde-thiamine pyrophosphate anion to isochorismate to yield 2-succinyl-5-enolpyruvyl-6-hydroxy-3-cyclohexene-1-carboxylate (SEPHCHC). The sequence is that of 2-succinyl-5-enolpyruvyl-6-hydroxy-3-cyclohexene-1-carboxylate synthase from Vibrio campbellii (strain ATCC BAA-1116).